The sequence spans 102 residues: Large ribosomal subunit protein bL21 (102 aa).

Belongs to the bacterial ribosomal protein bL21 family. Part of the 50S ribosomal subunit. Contacts protein L20.

Its function is as follows. This protein binds to 23S rRNA in the presence of protein L20. This chain is Large ribosomal subunit protein bL21, found in Leifsonia xyli subsp. xyli (strain CTCB07).